Consider the following 40-residue polypeptide: MKVRKSLRSLKNKPGAQVVRRRGKVYVINKKDPRFKARQG.

This sequence belongs to the bacterial ribosomal protein bL36 family.

This chain is Large ribosomal subunit protein bL36, found in Corynebacterium diphtheriae (strain ATCC 700971 / NCTC 13129 / Biotype gravis).